A 425-amino-acid polypeptide reads, in one-letter code: Histone-binding protein RBBP4 (425 aa).

Residue Ala2 is modified to N-acetylalanine. WD repeat units lie at residues 32 to 125 (YDLV…NHEG), 126 to 175 (EVNR…RLRG), 176 to 223 (HQKE…KTIF), 225 to 270 (GHTA…HSVD), 271 to 314 (AHTA…HSFE), 315 to 371 (SHKD…FIHG), and 372 to 404 (GHTA…VWQM). Residues 361–406 (DGPPELLFIHGGHTAKISDFSWNPNEPWVICSVSEDNIMQVWQMAE) are interaction with HAT1.

Belongs to the WD repeat RBAP46/RBAP48/MSI1 family. Binds directly to histone H4, probably via helix 1 of the histone fold, a region that is not accessible when histone H4 is in chromatin. Interacts with CHAF1A, HDAC1, HDAC2, HDAC3 and HIRA. May also interact with HAT1.

Its subcellular location is the nucleus. It localises to the chromosome. It is found in the telomere. Core histone-binding subunit that may target chromatin assembly factors, chromatin remodeling factors and histone deacetylases to their histone substrates in a manner that is regulated by nucleosomal DNA. Component of several complexes which regulate chromatin metabolism. In Gallus gallus (Chicken), this protein is Histone-binding protein RBBP4 (RBBP4).